The primary structure comprises 286 residues: Tyrosine recombinase XerA (286 aa).

One can recognise a Core-binding (CB) domain in the interval 5–82 (TLRSEVLEEF…ALKAYFKFEG (78 aa)). The Tyr recombinase domain occupies 98–274 (TLPKSLTEEE…TAKHLKEAVE (177 aa)). Residues Arg135, Lys160, His226, Arg229, and His252 contribute to the active site. The active-site O-(3'-phospho-DNA)-tyrosine intermediate is Tyr261.

This sequence belongs to the 'phage' integrase family. XerA subfamily.

It is found in the cytoplasm. Its function is as follows. Site-specific tyrosine recombinase, which acts by catalyzing the cutting and rejoining of the recombining DNA molecules. The chain is Tyrosine recombinase XerA from Pyrococcus furiosus (strain ATCC 43587 / DSM 3638 / JCM 8422 / Vc1).